The following is a 326-amino-acid chain: Beta-ketoacyl-[acyl-carrier-protein] synthase III (326 aa).

Active-site residues include cysteine 111 and histidine 252. Positions 253–257 (QANIR) are ACP-binding. Asparagine 282 is a catalytic residue.

It belongs to the thiolase-like superfamily. FabH family. In terms of assembly, homodimer.

The protein localises to the plastid. It localises to the chloroplast. It carries out the reaction malonyl-[ACP] + acetyl-CoA + H(+) = 3-oxobutanoyl-[ACP] + CO2 + CoA. The protein operates within lipid metabolism; fatty acid biosynthesis. In terms of biological role, catalyzes the condensation reaction of fatty acid synthesis by the addition to an acyl acceptor of two carbons from malonyl-ACP. Catalyzes the first condensation reaction which initiates fatty acid synthesis and may therefore play a role in governing the total rate of fatty acid production. Possesses both acetoacetyl-ACP synthase and acetyl transacylase activities. Its substrate specificity determines the biosynthesis of branched-chain and/or straight-chain of fatty acids. The chain is Beta-ketoacyl-[acyl-carrier-protein] synthase III from Porphyra purpurea (Red seaweed).